A 142-amino-acid polypeptide reads, in one-letter code: Hemoglobin subunit alpha (142 aa).

The Globin domain maps to 2–142; sequence VLSPDDKKHV…VSTVLTSKYR (141 aa). Ser4 is subject to Phosphoserine. Lys8 and Lys12 each carry N6-succinyllysine. N6-acetyllysine; alternate is present on Lys17. The residue at position 17 (Lys17) is an N6-succinyllysine; alternate. Tyr25 bears the Phosphotyrosine mark. Residue Ser36 is modified to Phosphoserine. At Lys41 the chain carries N6-succinyllysine. Ser50 carries the phosphoserine modification. An O2-binding site is contributed by His59. His88 serves as a coordination point for heme b. At Ser103 the chain carries Phosphoserine. A Phosphothreonine modification is found at Thr109. 2 positions are modified to phosphoserine: Ser125 and Ser132. Phosphothreonine is present on residues Thr135 and Thr138. Residue Ser139 is modified to Phosphoserine.

It belongs to the globin family. Heterotetramer of two alpha chains and two beta chains. As to expression, red blood cells.

Involved in oxygen transport from the lung to the various peripheral tissues. In terms of biological role, hemopressin acts as an antagonist peptide of the cannabinoid receptor CNR1. Hemopressin-binding efficiently blocks cannabinoid receptor CNR1 and subsequent signaling. This chain is Hemoglobin subunit alpha (HBA), found in Papio anubis (Olive baboon).